The primary structure comprises 539 residues: Effector protein hopAB1 (539 aa).

4 disordered regions span residues 1–93 (MPGI…PEAQ), 163–220 (QTVR…RHPQ), 230–249 (ASAA…LRRL), and 315–336 (RQTT…SGRR). The segment covering 18-31 (TDGEPVTEREHDSS) has biased composition (basic and acidic residues). A compositionally biased stretch (low complexity) spans 181–194 (SSSGSSQRSLIGRS).

Belongs to the HopAB family.

It localises to the secreted. Effector protein that plays different roles depending on the species and plant cultivars that interact with the pathogen. Acts as a virulence determinant by enhancing the development of disease symptoms and bacterial growth. Acts as an avirulence factor by eliciting hypersensitive response (HR) and plant resistance. This is Effector protein hopAB1 (hopAB1) from Pseudomonas savastanoi pv. phaseolicola (strain 1448A / Race 6) (Pseudomonas syringae pv. phaseolicola (strain 1448A / Race 6)).